The chain runs to 565 residues: MPQQRETAHKTREWKKLTEYADATRGTQLRELFTEQPGRSSDMTYNVGPLHVDLSKNLIDERGLRLLLDLARARGLEDYRSAMFDGEHINTTEDRAVLHTALRIPVDREFSIPVGADETQDVAADVHAVLGRMRDFAKALRSGSWQGVTGHTIKHVVNIGIGGSDLGPAMAAQALRPYMTAGITPHFISNIDPADVAGTLDGLDAESTLFVIASKTFTTSETLANAHAARRWLLRNLADAGVDVEGDDAIRDITAKHFVAVSTAAEKVQEFGIDTKNMFEFWDWVGGRYSVDSAIGLSLMAAIGPQDFMRFLEGFHEVDDHFRTEPLEMNIPVLMGMLGVWYTDFLGAQSHAVLPYSEDMARFPAYLQQLTMESNGKSVQLDGTPVEVPSGEIYWGEPGTNGQHAFFQLLHQGTHLVPADFIGFVNPHDDAVAADGTTSMHDMLMSNFFAQTRVLAFGKNAEELKEEGVAPELIPHKVMPGNRPTTTILANKLTPKTLGALIALYEHIVFVQGVIWGINSFDQWGVELGKKQANALLPAVTGAERSDAGDSSTDDLIAYYRQHRD.

Glu373 serves as the catalytic Proton donor. Residues His404 and Lys530 contribute to the active site.

The protein belongs to the GPI family.

The protein localises to the cytoplasm. The enzyme catalyses alpha-D-glucose 6-phosphate = beta-D-fructose 6-phosphate. It functions in the pathway carbohydrate biosynthesis; gluconeogenesis. The protein operates within carbohydrate degradation; glycolysis; D-glyceraldehyde 3-phosphate and glycerone phosphate from D-glucose: step 2/4. Functionally, catalyzes the reversible isomerization of glucose-6-phosphate to fructose-6-phosphate. In Corynebacterium jeikeium (strain K411), this protein is Glucose-6-phosphate isomerase.